A 668-amino-acid chain; its full sequence is DNA ligase (668 aa).

NAD(+)-binding positions include D37–D41, S86–M87, and E116. K118 acts as the N6-AMP-lysine intermediate in catalysis. Positions 139, 173, 288, and 312 each coordinate NAD(+). The Zn(2+) site is built by C406, C409, C424, and C429. In terms of domain architecture, BRCT spans A590 to K668.

Belongs to the NAD-dependent DNA ligase family. LigA subfamily. Mg(2+) is required as a cofactor. It depends on Mn(2+) as a cofactor.

The catalysed reaction is NAD(+) + (deoxyribonucleotide)n-3'-hydroxyl + 5'-phospho-(deoxyribonucleotide)m = (deoxyribonucleotide)n+m + AMP + beta-nicotinamide D-nucleotide.. Its function is as follows. DNA ligase that catalyzes the formation of phosphodiester linkages between 5'-phosphoryl and 3'-hydroxyl groups in double-stranded DNA using NAD as a coenzyme and as the energy source for the reaction. It is essential for DNA replication and repair of damaged DNA. The chain is DNA ligase from Lactobacillus gasseri (strain ATCC 33323 / DSM 20243 / BCRC 14619 / CIP 102991 / JCM 1131 / KCTC 3163 / NCIMB 11718 / NCTC 13722 / AM63).